A 554-amino-acid chain; its full sequence is Valerianol synthase TPS1C (554 aa).

Mg(2+) is bound by residues aspartate 307 and aspartate 311. The DDXXD motif signature appears at 326–330 (VQRWD). Residues aspartate 452, serine 456, and glutamate 460 each contribute to the Mg(2+) site.

It belongs to the terpene synthase family. Mg(2+) is required as a cofactor.

The catalysed reaction is (2E,6E)-farnesyl diphosphate + H2O = valerianol + diphosphate. It participates in secondary metabolite biosynthesis; terpenoid biosynthesis. Terpene synthase that catalyzes the biosynthesis of the terpene valerianol, which is a volatile compound of floral scent. The chain is Valerianol synthase TPS1C from Camellia hiemalis (Camellia).